The sequence spans 329 residues: Protein-arginine N-acetylglucosaminyltransferase NleB1 (329 aa).

An N-beta-linked (GlcNAc) arginine; by autocatalysis glycan is attached at Arg-13. 48-50 (QWF) is a UDP-N-acetyl-alpha-D-glucosamine binding site. Arg-53 carries N-beta-linked (GlcNAc) arginine; by autocatalysis glycosylation. Residue Tyr-72 coordinates UDP-N-acetyl-alpha-D-glucosamine. An N-beta-linked (GlcNAc) arginine; by autocatalysis glycan is attached at Arg-159. A UDP-N-acetyl-alpha-D-glucosamine-binding site is contributed by 219–222 (YLDA). Residues 221 to 223 (DAD) carry the DXD motif motif. Asp-223 is a Mn(2+) binding site. The active-site Proton acceptor is Glu-253. Arg-293 is a glycosylation site (N-beta-linked (GlcNAc) arginine; by autocatalysis). Positions 320 and 322 each coordinate Mn(2+). UDP-N-acetyl-alpha-D-glucosamine contacts are provided by residues Ser-322 and 327–329 (SSW).

The protein belongs to the glycosyltransferase NleB family. It depends on Mn(2+) as a cofactor. Auto-glycosylated: arginine GlcNAcylation is required for activity toward death domain-containing host target proteins.

The protein localises to the secreted. Its subcellular location is the host cytoplasm. It carries out the reaction L-arginyl-[protein] + UDP-N-acetyl-alpha-D-glucosamine = N(omega)-(N-acetyl-beta-D-glucosaminyl)-L-arginyl-[protein] + UDP + H(+). In terms of biological role, protein-arginine N-acetylglucosaminyltransferase effector that disrupts TNF signaling in infected cells, including NF-kappa-B signaling, apoptosis and necroptosis. Acts by catalyzing the transfer of a single N-acetylglucosamine (GlcNAc) to a conserved arginine residue in the death domain of host proteins FADD, TRADD, FAS, TNFRSF1A/TNFR1, TNFRSF25/DR3 and RIPK1: arginine GlcNAcylation prevents homotypic/heterotypic death domain interactions and assembly of the oligomeric TNF-alpha receptor complex, thereby disrupting TNF signaling. Has preference for host FADD as substrate compared to other death domain-containing proteins. Also acts on host proteins without a death domain: catalyzes arginine GlcNAcylation of HIF1A, thereby regulating host glucose metabolism. Also displays intra-bacterial activity by mediating GlcNAcylation of glutathione synthetase GshB. Catalyzes auto-GlcNAcylation, which is required for activity toward death domain-containing host target proteins. Shows a higher enzymatic activity than NleB2. This Escherichia coli O127:H6 (strain E2348/69 / EPEC) protein is Protein-arginine N-acetylglucosaminyltransferase NleB1.